The following is a 122-amino-acid chain: Holo-[acyl-carrier-protein] synthase (122 aa).

Asp8 and Glu55 together coordinate Mg(2+).

The protein belongs to the P-Pant transferase superfamily. AcpS family. Mg(2+) serves as cofactor.

It is found in the cytoplasm. It catalyses the reaction apo-[ACP] + CoA = holo-[ACP] + adenosine 3',5'-bisphosphate + H(+). In terms of biological role, transfers the 4'-phosphopantetheine moiety from coenzyme A to a Ser of acyl-carrier-protein. This is Holo-[acyl-carrier-protein] synthase from Fusobacterium nucleatum subsp. nucleatum (strain ATCC 25586 / DSM 15643 / BCRC 10681 / CIP 101130 / JCM 8532 / KCTC 2640 / LMG 13131 / VPI 4355).